We begin with the raw amino-acid sequence, 287 residues long: Iron-sulfur cluster carrier protein (287 aa).

47–54 (GKGGVGKS) is an ATP binding site.

Belongs to the Mrp/NBP35 ATP-binding proteins family. As to quaternary structure, homodimer.

Functionally, binds and transfers iron-sulfur (Fe-S) clusters to target apoproteins. Can hydrolyze ATP. The polypeptide is Iron-sulfur cluster carrier protein (Pseudomonas fragi).